We begin with the raw amino-acid sequence, 263 residues long: uncharacterized protein (263 aa).

This sequence belongs to the A.longa ORF167/ORF288 family.

The protein resides in the plastid. This is an uncharacterized protein from Euglena longa (Euglenophycean alga).